The chain runs to 464 residues: UDP-N-acetylmuramate--L-alanine ligase (464 aa).

117–123 (GTHGKTT) serves as a coordination point for ATP.

The protein belongs to the MurCDEF family.

It localises to the cytoplasm. It carries out the reaction UDP-N-acetyl-alpha-D-muramate + L-alanine + ATP = UDP-N-acetyl-alpha-D-muramoyl-L-alanine + ADP + phosphate + H(+). It participates in cell wall biogenesis; peptidoglycan biosynthesis. In terms of biological role, cell wall formation. The chain is UDP-N-acetylmuramate--L-alanine ligase from Streptomyces avermitilis (strain ATCC 31267 / DSM 46492 / JCM 5070 / NBRC 14893 / NCIMB 12804 / NRRL 8165 / MA-4680).